Consider the following 643-residue polypeptide: Threonine--tRNA ligase (643 aa).

The 61-residue stretch at 1-61 (MIKVTLKDGS…KEDVSLSICT (61 aa)) folds into the TGS domain. The catalytic stretch occupies residues 240 to 540 (DHNKLGRELK…LIEKYAGAFP (301 aa)). Residues C335, H386, and H517 each coordinate Zn(2+).

This sequence belongs to the class-II aminoacyl-tRNA synthetase family. In terms of assembly, homodimer. Zn(2+) serves as cofactor.

The protein resides in the cytoplasm. It catalyses the reaction tRNA(Thr) + L-threonine + ATP = L-threonyl-tRNA(Thr) + AMP + diphosphate + H(+). In terms of biological role, catalyzes the attachment of threonine to tRNA(Thr) in a two-step reaction: L-threonine is first activated by ATP to form Thr-AMP and then transferred to the acceptor end of tRNA(Thr). Also edits incorrectly charged L-seryl-tRNA(Thr). This chain is Threonine--tRNA ligase, found in Clostridium botulinum (strain Eklund 17B / Type B).